We begin with the raw amino-acid sequence, 530 residues long: CTP synthase (530 aa).

The segment at 1–267 (MTKYVFVTGG…DDFVLNHFKM (267 aa)) is amidoligase domain. Residue S13 coordinates CTP. Residue S13 participates in UTP binding. 14-19 (SLGKGI) serves as a coordination point for ATP. Position 54 (Y54) interacts with L-glutamine. D71 contributes to the ATP binding site. Residues D71 and E141 each coordinate Mg(2+). Residues 148–150 (DIE), 188–193 (KTKPTQ), and K224 contribute to the CTP site. UTP contacts are provided by residues 188–193 (KTKPTQ) and K224. 240 to 242 (RDA) serves as a coordination point for ATP. A Glutamine amidotransferase type-1 domain is found at 292 to 530 (KIALVGKYIE…LFKAFIGATM (239 aa)). G354 contributes to the L-glutamine binding site. Residue C381 is the Nucleophile; for glutamine hydrolysis of the active site. L-glutamine-binding positions include 382 to 385 (LGMQ), E405, and R463. Residues H508 and E510 contribute to the active site.

This sequence belongs to the CTP synthase family. Homotetramer.

The catalysed reaction is UTP + L-glutamine + ATP + H2O = CTP + L-glutamate + ADP + phosphate + 2 H(+). It catalyses the reaction L-glutamine + H2O = L-glutamate + NH4(+). The enzyme catalyses UTP + NH4(+) + ATP = CTP + ADP + phosphate + 2 H(+). Its pathway is pyrimidine metabolism; CTP biosynthesis via de novo pathway; CTP from UDP: step 2/2. With respect to regulation, allosterically activated by GTP, when glutamine is the substrate; GTP has no effect on the reaction when ammonia is the substrate. The allosteric effector GTP functions by stabilizing the protein conformation that binds the tetrahedral intermediate(s) formed during glutamine hydrolysis. Inhibited by the product CTP, via allosteric rather than competitive inhibition. Catalyzes the ATP-dependent amination of UTP to CTP with either L-glutamine or ammonia as the source of nitrogen. Regulates intracellular CTP levels through interactions with the four ribonucleotide triphosphates. This is CTP synthase from Latilactobacillus sakei subsp. sakei (strain 23K) (Lactobacillus sakei subsp. sakei).